We begin with the raw amino-acid sequence, 849 residues long: MSDTRRRVKVYTLNEDRQWDDRGTGHVSSTYVEELKGMSLLVRAESDGSLLLESKINPNTAYQKQQDTLIVWSEAENYDLALSFQEKAGCDEIWEKICQVQGKDPSVEVTQDLIDESEEERFEEMPETSHLIDLPTCELNKLEEIADLVTSVLSSPIRREKLALALENEGYIKKLLQLFQACENLENTEGLHHLYEIIRGILFLNKATLFEVMFSDECIMDVVGCLEYDPALAQPKRHREFLTKTAKFKEVIPITDSELRQKIHQTYRVQYIQDIILPTPSVFEENFLSTLTSFIFFNKVEIVSMLQEDEKFLSEVFAQLTDEATDDDKRRELVNFFKEFCAFSQTLQPQNRDAFFKTLAKLGILPALEIVMGMDDLQVRSAATDIFSYLVEFSPSMVREFVMQEAQQSDDDILLINVVIEQMICDTDPELGGAVQLMGLLRTLIDPENMLATTNKTEKSEFLNFFYNHCMHVLTAPLLTNTSEDKCEKDFFLKHYRYSWSFICTPSHSHSHSTPSSSISQDNIVGSNKNNTICPDNYQTAQLLALILELLTFCVEHHTYHIKNYIMNKDLLRRVLVLMNSKHTFLALCALRFMRRIIGLKDEFYNRYITKGNLFEPVINALLDNGTRYNLLNSAVIELFEFIRVEDIKSLTAHIVENFYKALESIEYVQTFKGLKTKYEQEKDRQNQKLNSVPSILRSNRFRRDAKALEEDEEMWFNEDEEEEGKAVVAPVEKPKPEDDFPDNYEKFMETKKAKESEDKENLPKRTSPGGFKFTFSHSASAANGTNSKSVVAQIPPATSNGSSSKTTNLPTSVTATKGSLVGLVDYPDDEEEDEEEESSPRKRPRLGS.

Residues 1 to 100 (MSDTRRRVKV…DEIWEKICQV (100 aa)) form the WH1 domain. Phosphoserine occurs at positions 117 and 695. Positions 714–724 (EMWFNEDEEEE) are enriched in acidic residues. Positions 714–849 (EMWFNEDEEE…SPRKRPRLGS (136 aa)) are disordered. The segment covering 733-764 (EKPKPEDDFPDNYEKFMETKKAKESEDKENLP) has biased composition (basic and acidic residues). Positions 776-818 (FSHSASAANGTNSKSVVAQIPPATSNGSSSKTTNLPTSVTATK) are enriched in polar residues. A compositionally biased stretch (acidic residues) spans 827–838 (YPDDEEEDEEEE). Ser840 carries the post-translational modification Phosphoserine.

The protein belongs to the SMEK family. As to quaternary structure, serine/threonine-protein phosphatase 4 (PP4) occurs in different assemblies of the catalytic and one or more regulatory subunits. Component of the PP4 complex PPP4C-PPP4R2-PPP4R3B. In terms of tissue distribution, moderately expressed in tissues and specific brain regions examined.

Its subcellular location is the cytoplasm. The protein localises to the cytoskeleton. The protein resides in the microtubule organizing center. It localises to the centrosome. It is found in the nucleus. Regulatory subunit of serine/threonine-protein phosphatase 4 (PP4). May regulate the activity of PPP4C at centrosomal microtubule organizing centers. The sequence is that of Serine/threonine-protein phosphatase 4 regulatory subunit 3B from Homo sapiens (Human).